A 673-amino-acid chain; its full sequence is MLEQARRRLAGLNAKLRHHDMLYHGLDAPEVTDHQYDLLVQEKKRLLDEFPDIRQYDDYADVVGTPKIDSRFPKVQHLEPMLSLENAFTVQDVEKFITRVRRFLELQPDDILELSCELKMDGMSFSALYHGGKLTRVATRGNGHFGEDITTNAMVLRGLPHQLDSAPEVLEVRGEIYMHHEDFEKLRGSCNFANPRNAAAGSIRQLNQKIVEERNLSYVAYSAVNSTFATQQEILKQLDEWGFHTNKQVLFTDKIEEAIAFYNSVYTTRSALGYDIDGVVYKVNSINFQKLLGATGKSPRWAIAHKFPSTEARTKLLDITVQVGRTGVVTPIAELEPINIGGVMVSRASLHNLNEIERKDVRIGDLVIVKRAGEVIPQVVDVDKTLRSSGTQKFVFPSHCPSCGSKLHREPGEVALRCVAELSCKAQALERVKHFVSRDGLNIMGLGAKQIEFFCNHGLIGSIADIFSLEEKLHGINLDTEHGWGEKSVANLIAAIRNSATVRLSNFIFALGIRFIGVGAAKLIAEHYRSYKNWHQAMLALTETHDTVQIRGLGEKSISSLKAFFSVQGNLEVLESLSAKLNILDEASPAQRGSSAISGKTVVFTGTLESMSRTEAKLQAESLGAKVANSVSANTWLLVAGSNPGSKHEKALSLNVRVIDEQTWVKMVEDARS.

NAD(+)-binding positions include 33–37 (DHQYD), 83–84 (SL), and glutamate 117. Catalysis depends on lysine 119, which acts as the N6-AMP-lysine intermediate. NAD(+)-binding residues include arginine 140, glutamate 175, lysine 282, and lysine 306. Cysteine 400, cysteine 403, cysteine 418, and cysteine 424 together coordinate Zn(2+). The BRCT domain occupies 592 to 673 (RGSSAISGKT…WVKMVEDARS (82 aa)).

The protein belongs to the NAD-dependent DNA ligase family. LigA subfamily. Requires Mg(2+) as cofactor. Mn(2+) is required as a cofactor.

The enzyme catalyses NAD(+) + (deoxyribonucleotide)n-3'-hydroxyl + 5'-phospho-(deoxyribonucleotide)m = (deoxyribonucleotide)n+m + AMP + beta-nicotinamide D-nucleotide.. Functionally, DNA ligase that catalyzes the formation of phosphodiester linkages between 5'-phosphoryl and 3'-hydroxyl groups in double-stranded DNA using NAD as a coenzyme and as the energy source for the reaction. It is essential for DNA replication and repair of damaged DNA. In Anaplasma marginale (strain Florida), this protein is DNA ligase.